A 935-amino-acid chain; its full sequence is Progesterone receptor (935 aa).

The interval 1–164 is AF3; mediates transcriptional activation; that stretch reads MTELKAKGPR…PATQGVLSPL (164 aa). The segment at 1 to 254 is disordered; the sequence is MTELKAKGPR…GGAAAGGGAA (254 aa). Positions 1-568 are modulating, Pro-Rich; the sequence is MTELKAKGPR…YSFESLPQKI (568 aa). The residue at position 20 (serine 20) is a Phosphoserine. The short motif at 55 to 59 is the LXXL motif 1 element; that stretch reads LDGLL. A Phosphoserine modification is found at serine 81. The LXXL motif 2 signature appears at 115–119; sequence LDTLL. 2 positions are modified to phosphoserine: serine 130 and serine 162. Residues 165-305 form a mediates transcriptional transrepression region; sequence MSRSGGKAGD…LATTVMDFIH (141 aa). The Nuclear localization signal motif lies at 183–187; the sequence is KVLPR. Residues serine 190 and serine 213 each carry the phosphoserine modification. The segment covering 220–231 has biased composition (acidic residues); sequence EVEEEDGSESED. Over residues 232 to 246 the composition is skewed to low complexity; that stretch reads SAGPLLKGKPRALGG. Serine 294 is subject to Phosphoserine; by MAPK1. A disordered region spans residues 331–378; sequence GGAGAASAFAPPRSSPSASSTPVAVGDFPDCAYPPDAEPKDDAYPLYS. Residues 335–350 are compositionally biased toward low complexity; it reads AASAFAPPRSSPSASS. Position 345 is a phosphoserine; by MAPK (serine 345). Residue lysine 388 forms a Glycyl lysine isopeptide (Lys-Gly) (interchain with G-Cter in SUMO); alternate linkage. A Glycyl lysine isopeptide (Lys-Gly) (interchain with G-Cter in ubiquitin); alternate cross-link involves residue lysine 388. Residue serine 400 is modified to Phosphoserine; by CDK2. Pro residues predominate over residues 418–430; it reads PLGPPPPLPPRAP. The disordered stretch occupies residues 418-438; the sequence is PLGPPPPLPPRAPPTRAGEAA. Residues 456–548 form an AF1; mediates transcriptional activation region; it reads STLECILYKA…VYPPYLNYLR (93 aa). Residue lysine 533 forms a Glycyl lysine isopeptide (Lys-Gly) (interchain with G-Cter in SUMO) linkage. 2 consecutive NR C4-type zinc fingers follow at residues 569 to 589 and 605 to 629; these read CLIC…CGSC and CAGR…LRKC. The nuclear receptor DNA-binding region spans 569–641; the sequence is CLICGDEASG…AGMVLGGRKF (73 aa). At serine 678 the chain carries Phosphoserine. The NR LBD domain occupies 681–915; that stretch reads QDIQLIPPLI…EFPEMMSEVI (235 aa). The interval 689-935 is AF2; mediates transcriptional activation; that stretch reads LINLLMSIEP…MVKPLLFHKK (247 aa).

This sequence belongs to the nuclear hormone receptor family. In terms of assembly, interacts with SMARD1 and UNC45A. Interacts with CUEDC2; the interaction promotes ubiquitination, decreases sumoylation, and represses transcriptional activity. Interacts with PIAS3; the interaction promotes sumoylation of PR in a hormone-dependent manner, inhibits DNA-binding, and alters nuclear export. Interacts with SP1; the interaction requires ligand-induced phosphorylation on Ser-345 by ERK1/2-MAPK. Interacts with PRMT2. Interacts with NCOA2 and NCOA1. Interacts with KLF9. Interacts with GTF2B. Phosphorylated on multiple serine sites. Several of these sites are hormone-dependent. Phosphorylation on Ser-294 is highly hormone-dependent and modulates ubiquitination and sumoylation on Lys-388. Phosphorylation on Ser-102 and Ser-345 also requires induction by hormone. Basal phosphorylation on Ser-81, Ser-162, Ser-190 and Ser-400 is increased in response to progesterone and can be phosphorylated in vitro by the CDK2-A1 complex. Increased levels of phosphorylation on Ser-400 also in the presence of EGF, heregulin, IGF, PMA and FBS. Phosphorylation at this site by CDK2 is ligand-independent, and increases nuclear translocation and transcriptional activity. Phosphorylation at Ser-162 and Ser-294, but not at Ser-190, is impaired during the G(2)/M phase of the cell cycle. Phosphorylation on Ser-345 by ERK1/2 MAPK is required for interaction with SP1. Post-translationally, sumoylation is hormone-dependent and represses transcriptional activity. Sumoylation on all three sites is enhanced by PIAS3. Desumoylated by SENP1. Sumoylation on Lys-388, the main site of sumoylation, is repressed by ubiquitination on the same site, and modulated by phosphorylation at Ser-294. In terms of processing, ubiquitination is hormone-dependent and represses sumoylation on the same site. Promoted by MAPK-mediated phosphorylation on Ser-294. Palmitoylated by ZDHHC7 and ZDHHC21. Palmitoylation is required for plasma membrane targeting and for rapid intracellular signaling via ERK and AKT kinases and cAMP generation.

Its subcellular location is the nucleus. It is found in the cytoplasm. In terms of biological role, the steroid hormones and their receptors are involved in the regulation of eukaryotic gene expression and affect cellular proliferation and differentiation in target tissues. Transcriptional activator of several progesteron-dependent promoters in a variety of cell types. Involved in activation of SRC-dependent MAPK signaling on hormone stimulation. This Pongo pygmaeus (Bornean orangutan) protein is Progesterone receptor (PGR).